Here is a 238-residue protein sequence, read N- to C-terminus: Adenylate dimethylallyltransferase (238 aa).

It belongs to the isopentenyl transferase family.

The catalysed reaction is dimethylallyl diphosphate + AMP = N(6)-(dimethylallyl)adenosine 5'-phosphate + diphosphate. In terms of biological role, transfers dimethylallyl groups to AMP as part of the biosynthesis of cytokinin phytohormones. The chain is Adenylate dimethylallyltransferase (tzs) from Ralstonia solanacearum (Pseudomonas solanacearum).